Consider the following 252-residue polypeptide: Methionine aminopeptidase (252 aa).

H76 serves as a coordination point for substrate. Positions 93, 104, and 168 each coordinate a divalent metal cation. H175 is a substrate binding site. Positions 202 and 233 each coordinate a divalent metal cation.

Belongs to the peptidase M24A family. Methionine aminopeptidase type 1 subfamily. Monomer. Co(2+) serves as cofactor. It depends on Zn(2+) as a cofactor. Mn(2+) is required as a cofactor. Requires Fe(2+) as cofactor.

The catalysed reaction is Release of N-terminal amino acids, preferentially methionine, from peptides and arylamides.. Functionally, removes the N-terminal methionine from nascent proteins. The N-terminal methionine is often cleaved when the second residue in the primary sequence is small and uncharged (Met-Ala-, Cys, Gly, Pro, Ser, Thr, or Val). Requires deformylation of the N(alpha)-formylated initiator methionine before it can be hydrolyzed. In Staphylococcus aureus (strain MRSA252), this protein is Methionine aminopeptidase.